The chain runs to 409 residues: Elongation factor Tu, chloroplastic (409 aa).

Residues 10-214 form the tr-type G domain; that stretch reads KPHVNIGTIG…AVDAYIPTPE (205 aa). Residues 19 to 26 form a G1 region; the sequence is GHVDHGKT. 19 to 26 lines the GTP pocket; that stretch reads GHVDHGKT. Mg(2+) is bound at residue Thr26. A G2 region spans residues 60–64; it reads GITIN. Positions 81–84 are G3; that stretch reads DCPG. GTP is bound by residues 81–85 and 136–139; these read DCPGH and NKQD. The segment at 136–139 is G4; the sequence is NKQD. Positions 174 to 176 are G5; that stretch reads SAL.

Belongs to the TRAFAC class translation factor GTPase superfamily. Classic translation factor GTPase family. EF-Tu/EF-1A subfamily.

Its subcellular location is the plastid. The protein localises to the chloroplast. It carries out the reaction GTP + H2O = GDP + phosphate + H(+). Functionally, GTP hydrolase that promotes the GTP-dependent binding of aminoacyl-tRNA to the A-site of ribosomes during protein biosynthesis. The polypeptide is Elongation factor Tu, chloroplastic (tufA) (Thalassiosira pseudonana (Marine diatom)).